A 314-amino-acid chain; its full sequence is MTVVPEGRKLLRLEVRNAQTPIERKPPWIKTRAKMGPEYTELKGLVRREGLHTVCEEAGCPNIFECWEDREATFLIGGEQCTRRCDFCQIDTGKPADLDRDEPRRVAESVQAMGLRYSTVTGVARDDLPDGGAWLYAETVRYIKRLNPNTGVELLIPDFNGNPEQLEEVFESRPEVLAHNVETVPRIFKRIRPAFRYDRSLAVITAARNFGLVTKSNLILGMGETIDEVRTALRDLHDAGCDIITITQYLRPSPRHHPVERWVHPDEFVELSAYAEGLGFAGVLAGPLVRSSYRAGKLYAQAARVRFADQPPVS.

[4Fe-4S] cluster is bound by residues Cys-55, Cys-60, Cys-66, Cys-81, Cys-85, Cys-88, and Ser-292. The Radical SAM core domain maps to 67–281 (WEDREATFLI…SAYAEGLGFA (215 aa)).

This sequence belongs to the radical SAM superfamily. Lipoyl synthase family. Requires [4Fe-4S] cluster as cofactor.

It localises to the cytoplasm. The enzyme catalyses [[Fe-S] cluster scaffold protein carrying a second [4Fe-4S](2+) cluster] + N(6)-octanoyl-L-lysyl-[protein] + 2 oxidized [2Fe-2S]-[ferredoxin] + 2 S-adenosyl-L-methionine + 4 H(+) = [[Fe-S] cluster scaffold protein] + N(6)-[(R)-dihydrolipoyl]-L-lysyl-[protein] + 4 Fe(3+) + 2 hydrogen sulfide + 2 5'-deoxyadenosine + 2 L-methionine + 2 reduced [2Fe-2S]-[ferredoxin]. The protein operates within protein modification; protein lipoylation via endogenous pathway; protein N(6)-(lipoyl)lysine from octanoyl-[acyl-carrier-protein]: step 2/2. Its function is as follows. Catalyzes the radical-mediated insertion of two sulfur atoms into the C-6 and C-8 positions of the octanoyl moiety bound to the lipoyl domains of lipoate-dependent enzymes, thereby converting the octanoylated domains into lipoylated derivatives. This is Lipoyl synthase from Mycolicibacterium smegmatis (strain ATCC 700084 / mc(2)155) (Mycobacterium smegmatis).